The chain runs to 156 residues: Small ribosomal subunit protein uS7 (156 aa).

This sequence belongs to the universal ribosomal protein uS7 family. Part of the 30S ribosomal subunit. Contacts proteins S9 and S11.

One of the primary rRNA binding proteins, it binds directly to 16S rRNA where it nucleates assembly of the head domain of the 30S subunit. Is located at the subunit interface close to the decoding center, probably blocks exit of the E-site tRNA. In Solidesulfovibrio magneticus (strain ATCC 700980 / DSM 13731 / RS-1) (Desulfovibrio magneticus), this protein is Small ribosomal subunit protein uS7.